The sequence spans 90 residues: Small ribosomal subunit protein bS20 (90 aa).

The protein belongs to the bacterial ribosomal protein bS20 family.

Its function is as follows. Binds directly to 16S ribosomal RNA. This chain is Small ribosomal subunit protein bS20, found in Rickettsia canadensis (strain McKiel).